The sequence spans 110 residues: Large ribosomal subunit protein uL22 (110 aa).

The protein belongs to the universal ribosomal protein uL22 family. In terms of assembly, part of the 50S ribosomal subunit.

Functionally, this protein binds specifically to 23S rRNA; its binding is stimulated by other ribosomal proteins, e.g. L4, L17, and L20. It is important during the early stages of 50S assembly. It makes multiple contacts with different domains of the 23S rRNA in the assembled 50S subunit and ribosome. The globular domain of the protein is located near the polypeptide exit tunnel on the outside of the subunit, while an extended beta-hairpin is found that lines the wall of the exit tunnel in the center of the 70S ribosome. In Cellvibrio japonicus (strain Ueda107) (Pseudomonas fluorescens subsp. cellulosa), this protein is Large ribosomal subunit protein uL22.